A 213-amino-acid polypeptide reads, in one-letter code: ABA-inducible protein PHV A1 (213 aa).

2 disordered regions span residues 1-158 (MASN…KDKT) and 182-213 (NTLG…TRNH). Positions 13–23 (GETKARTEEKT) are enriched in basic and acidic residues. LEA 11-mer repeat repeat units lie at residues 27–37 (MGATKQKAGQT), 38–48 (TEATKQKAGET), 49–59 (AEATKQKTGET), 60–70 (AEAAKQKAAEA), 78–88 (AQAAKDKTYET), 89–99 (AQAAKERAAQG), 111–121 (TEAAKQKAAET), 122–132 (TEAAKQKAAEA), and 133–143 (TEAAKQKASDT). An 11 X 11 AA tandem repeats of T-E-A-A-K-Q-K-A-A-E-T region spans residues 27–143 (MGATKQKAGQ…EAAKQKASDT (117 aa)). Basic and acidic residues-rich tracts occupy residues 41–74 (TKQK…KDKT), 81–98 (AKDK…RAAQ), and 109–140 (EKTE…KQKA). Low complexity predominate over residues 193 to 213 (ATKDATTGATVKDTTTTTRNH).

This sequence belongs to the LEA type 4 family.

The sequence is that of ABA-inducible protein PHV A1 (HVA1) from Hordeum vulgare (Barley).